The sequence spans 170 residues: MTDTHGTFIPTADLVDIIGDDVRSCDTQFRNLGGRTDFHGTITTVKCFQDNALLKSILGEDNPGGVLVIDGDASLHTALVGDIIAGLGRDHGWSGVVVNGAIRDSAVIGEMEFGCKALGTNPRKSSKTGAGERDVVVSFGGVDFTPGHYLYADSDGIVVTENPVKAPASN.

Substrate-binding positions include 81–84 (GDII) and arginine 103. Aspartate 104 serves as a coordination point for a divalent metal cation.

It belongs to the class II aldolase/RraA-like family. As to quaternary structure, homotrimer. The cofactor is a divalent metal cation.

The enzyme catalyses 4-hydroxy-4-methyl-2-oxoglutarate = 2 pyruvate. The catalysed reaction is oxaloacetate + H(+) = pyruvate + CO2. Catalyzes the aldol cleavage of 4-hydroxy-4-methyl-2-oxoglutarate (HMG) into 2 molecules of pyruvate. Also contains a secondary oxaloacetate (OAA) decarboxylase activity due to the common pyruvate enolate transition state formed following C-C bond cleavage in the retro-aldol and decarboxylation reactions. In Corynebacterium efficiens (strain DSM 44549 / YS-314 / AJ 12310 / JCM 11189 / NBRC 100395), this protein is Putative 4-hydroxy-4-methyl-2-oxoglutarate aldolase.